A 164-amino-acid polypeptide reads, in one-letter code: Protein SprT (164 aa).

The 143-residue stretch at 14 to 156 folds into the SprT-like domain; the sequence is QQAETFFKRP…LCKRCRAILV (143 aa). Histidine 69 is a Zn(2+) binding site. Glutamate 70 is an active-site residue. Histidine 73 is a binding site for Zn(2+).

Belongs to the SprT family. Zn(2+) is required as a cofactor.

It is found in the cytoplasm. In Pseudomonas putida (strain GB-1), this protein is Protein SprT.